We begin with the raw amino-acid sequence, 386 residues long: NADPH-dependent alkenal/one oxidoreductase, chloroplastic (386 aa).

The protein belongs to the zinc-containing alcohol dehydrogenase family. Quinone oxidoreductase subfamily.

It is found in the plastid. The protein localises to the chloroplast. In terms of biological role, reduces the double bond in short-chain unsaturated carbonyls. Acts preferentially on alpha,beta-unsaturated ketones rather on alpha,beta-unsaturated aldehydes. Has no activity with (E)-2-hexenal and (E)-2-pentenal. Contributes to detoxify stromal reactive carbonyls produced under oxidative stress. The polypeptide is NADPH-dependent alkenal/one oxidoreductase, chloroplastic (Arabidopsis thaliana (Mouse-ear cress)).